The sequence spans 444 residues: Magnesium transporter MRS2-F (444 aa).

The disordered stretch occupies residues 128-155; that stretch reads FTDMEGESSAVTSPFPALTSTTPNELEM. Residues 145–155 show a composition bias toward polar residues; it reads LTSTTPNELEM. Positions 195-258 form a coiled coil; sequence VCLESACRSL…QKVRDELEHL (64 aa). The chain crosses the membrane as a helical span at residues 370-390; sequence GVMLSTATVVITAGVAVVGLF. The short motif at 391–393 is the Required for magnesium transport activity element; that stretch reads GMN. A helical transmembrane segment spans residues 415–435; it reads FWETTLGTIAGCTVMYIVAMG.

This sequence belongs to the CorA metal ion transporter (MIT) (TC 1.A.35.5) family.

It localises to the membrane. In terms of biological role, magnesium transporter that may mediate the influx of magnesium. The polypeptide is Magnesium transporter MRS2-F (MRS2-F) (Oryza sativa subsp. indica (Rice)).